The primary structure comprises 184 residues: Protein Syd (184 aa).

Belongs to the Syd family.

The protein localises to the cell inner membrane. Interacts with the SecY protein in vivo. May bind preferentially to an uncomplexed state of SecY, thus functioning either as a chelating agent for excess SecY in the cell or as a regulatory factor that negatively controls the translocase function. In Photorhabdus laumondii subsp. laumondii (strain DSM 15139 / CIP 105565 / TT01) (Photorhabdus luminescens subsp. laumondii), this protein is Protein Syd.